A 430-amino-acid polypeptide reads, in one-letter code: Agropine synthesis reductase (430 aa).

203–227 contacts NAD(+); sequence LVSGSNRGVGKAIAEDLIAHGYRLS. Serine 333 contributes to the substrate binding site. Tyrosine 346 functions as the Proton acceptor in the catalytic mechanism.

It belongs to the short-chain dehydrogenases/reductases (SDR) family.

It participates in opine metabolism; mannopine biosynthesis. In terms of biological role, reduces deoxy-fructosyl-glutamine to mannopine. The polypeptide is Agropine synthesis reductase (mas1) (Rhizobium rhizogenes (Agrobacterium rhizogenes)).